The sequence spans 281 residues: Diaminopimelate epimerase (281 aa).

Residues N14 and N65 each coordinate substrate. C74 acts as the Proton donor in catalysis. Residues 75 to 76, N165, N198, and 216 to 217 each bind substrate; these read GN and ER. Catalysis depends on C225, which acts as the Proton acceptor. 226–227 provides a ligand contact to substrate; it reads GT.

It belongs to the diaminopimelate epimerase family. In terms of assembly, homodimer.

Its subcellular location is the cytoplasm. It carries out the reaction (2S,6S)-2,6-diaminopimelate = meso-2,6-diaminopimelate. Its pathway is amino-acid biosynthesis; L-lysine biosynthesis via DAP pathway; DL-2,6-diaminopimelate from LL-2,6-diaminopimelate: step 1/1. Its function is as follows. Catalyzes the stereoinversion of LL-2,6-diaminopimelate (L,L-DAP) to meso-diaminopimelate (meso-DAP), a precursor of L-lysine and an essential component of the bacterial peptidoglycan. The protein is Diaminopimelate epimerase of Leptospira borgpetersenii serovar Hardjo-bovis (strain JB197).